A 210-amino-acid chain; its full sequence is MKQNSAKFIVIEGLEGAGKSSAIALVRDFIEKHNGVPPVCTREPGGTPLAERIRDLVKIADPNDPLCDESECLLIYAARAQLVANVIKPALAQGNWVLGDRHNLSSLAYQGGGRQLMPLVEAVSQATLKDFKPDLTLYLDIDPQLGLQRARDRGALDRIEQQALSFFERARATYLQLAARDESIVVIDASQTMAQVHKEILAVLQRQDWS.

Residue 13 to 20 coordinates ATP; the sequence is GLEGAGKS.

It belongs to the thymidylate kinase family.

The catalysed reaction is dTMP + ATP = dTDP + ADP. Phosphorylation of dTMP to form dTDP in both de novo and salvage pathways of dTTP synthesis. This is Thymidylate kinase from Shewanella loihica (strain ATCC BAA-1088 / PV-4).